Reading from the N-terminus, the 234-residue chain is MRLVQLSRHSIAFPSPEGALREPNGLLALGGDLSPARLLMAYQHGIFPWFSPGDPILWWSPDPRAVLWPEKFHLSRSMKRFHNASPYRVTLNYAFDRVIDGCANHRDEGTWITRGIEEAYRRLHELGHAHSIEVWRDRELVGGMYGVSQGALFCGESMFSRQENASKTALLVFCAEFTRHGGKLIDCQVLNSHTASLGAIEIPRRDYLDHLAALRQQPLASRFWVPRTLFLPRK.

This sequence belongs to the L/F-transferase family.

It is found in the cytoplasm. The enzyme catalyses N-terminal L-lysyl-[protein] + L-leucyl-tRNA(Leu) = N-terminal L-leucyl-L-lysyl-[protein] + tRNA(Leu) + H(+). It carries out the reaction N-terminal L-arginyl-[protein] + L-leucyl-tRNA(Leu) = N-terminal L-leucyl-L-arginyl-[protein] + tRNA(Leu) + H(+). It catalyses the reaction L-phenylalanyl-tRNA(Phe) + an N-terminal L-alpha-aminoacyl-[protein] = an N-terminal L-phenylalanyl-L-alpha-aminoacyl-[protein] + tRNA(Phe). In terms of biological role, functions in the N-end rule pathway of protein degradation where it conjugates Leu, Phe and, less efficiently, Met from aminoacyl-tRNAs to the N-termini of proteins containing an N-terminal arginine or lysine. The chain is Leucyl/phenylalanyl-tRNA--protein transferase from Salmonella agona (strain SL483).